The following is a 798-amino-acid chain: Integrin beta-1-A (798 aa).

Positions 1–21 (MAHYPVFTVGLLTCLVLCINA) are cleaved as a signal peptide. Residues 22–727 (QQGGTECLKA…VKEPECPSGP (706 aa)) lie on the Extracellular side of the membrane. In terms of domain architecture, PSI spans 27–77 (ECLKANAKSCGECIQAGPNCGWCTKVDFLQEGEPTSARCDDLAALKSKGCP). Intrachain disulfides connect cysteine 28/cysteine 46, cysteine 36/cysteine 464, cysteine 39/cysteine 65, cysteine 49/cysteine 76, cysteine 206/cysteine 212, cysteine 260/cysteine 300, cysteine 400/cysteine 414, cysteine 434/cysteine 462, cysteine 466/cysteine 486, cysteine 477/cysteine 489, cysteine 491/cysteine 500, cysteine 502/cysteine 533, cysteine 516/cysteine 531, cysteine 525/cysteine 536, cysteine 538/cysteine 553, cysteine 555/cysteine 576, cysteine 560/cysteine 574, cysteine 568/cysteine 579, cysteine 581/cysteine 590, cysteine 592/cysteine 615, cysteine 599/cysteine 613, cysteine 607/cysteine 618, cysteine 620/cysteine 630, cysteine 633/cysteine 636, cysteine 640/cysteine 691, cysteine 646/cysteine 665, cysteine 649/cysteine 661, and cysteine 699/cysteine 723. The tract at residues 76–106 (CPEDDIQNPRGRKQKLKDIPITSKGKGERMD) is disordered. Residues asparagine 109 and asparagine 131 are each glycosylated (N-linked (GlcNAc...) asparagine). Residues 139–377 (DYPIDLYYLM…QLIIDSYNSL (239 aa)) form the VWFA domain. 2 residues coordinate Mg(2+): serine 151 and serine 153. Ca(2+) contacts are provided by serine 153, aspartate 156, aspartate 157, and glutamate 188. Asparagine 211 and asparagine 223 each carry an N-linked (GlcNAc...) asparagine glycan. Ca(2+) contacts are provided by asparagine 243, aspartate 245, proline 247, and glutamate 248. Position 248 (glutamate 248) interacts with Mg(2+). Residues asparagine 268 and asparagine 362 are each glycosylated (N-linked (GlcNAc...) asparagine). N-linked (GlcNAc...) asparagine glycosylation is present at asparagine 416. I-EGF domains follow at residues 466 to 501 (CQDK…KECE), 502 to 554 (CSTD…KYCE), 555 to 591 (CDNF…SACD), and 592 to 631 (CSED…PTCE). N-linked (GlcNAc...) asparagine glycosylation occurs at asparagine 481. N-linked (GlcNAc...) asparagine glycosylation is present at asparagine 520. Asparagine 584 carries N-linked (GlcNAc...) asparagine glycosylation. N-linked (GlcNAc...) asparagine glycosylation occurs at asparagine 669. Residues 728–751 (DIIPIVAGVVAGIVLIGLALLLIW) form a helical membrane-spanning segment. Residues 752 to 798 (KLLMIIHDRREFAKFEKEKMNAKWDTGENPIYKSAVTTVVNPKYEGK) are Cytoplasmic-facing. Tyrosine 783 carries the post-translational modification Phosphotyrosine.

It belongs to the integrin beta chain family. As to quaternary structure, heterodimer of an alpha and a beta subunit.

It localises to the cell membrane. It is found in the cell projection. The protein localises to the invadopodium membrane. The protein resides in the ruffle membrane. Its subcellular location is the melanosome. It localises to the cleavage furrow. It is found in the lamellipodium. The protein localises to the ruffle. Functionally, beta integrins associate with alpha subunits to form receptor complexes that recognize the sequence R-G-D in a wide array of ligands. May be involved in osteoblast compaction. May play role in myoblast differentiation and fusion during skeletal myogenesis. This Xenopus laevis (African clawed frog) protein is Integrin beta-1-A (itgb1-a).